Here is a 148-residue protein sequence, read N- to C-terminus: Large ribosomal subunit protein uL15 (148 aa).

The span at 1–30 (MPSKLRKTRKLRGHVSHGHGRIGKHRKHPG) shows a compositional bias: basic residues. The interval 1–38 (MPSKLRKTRKLRGHVSHGHGRIGKHRKHPGGRGNAGGM) is disordered.

This sequence belongs to the universal ribosomal protein uL15 family. Component of the large ribosomal subunit.

The protein localises to the cytoplasm. Component of the large ribosomal subunit. The ribosome is a large ribonucleoprotein complex responsible for the synthesis of proteins in the cell. The sequence is that of Large ribosomal subunit protein uL15 (rpl27a) from Xenopus laevis (African clawed frog).